The following is a 256-amino-acid chain: UPF0246 protein SPO0106 (256 aa).

The protein belongs to the UPF0246 family.

In Ruegeria pomeroyi (strain ATCC 700808 / DSM 15171 / DSS-3) (Silicibacter pomeroyi), this protein is UPF0246 protein SPO0106.